Reading from the N-terminus, the 322-residue chain is Glycerol-3-phosphate dehydrogenase [NAD(P)+] (322 aa).

W11, R31, R32, and K101 together coordinate NADPH. Residues K101 and G130 each contribute to the sn-glycerol 3-phosphate site. Residue A134 participates in NADPH binding. Sn-glycerol 3-phosphate-binding residues include K184, D237, S247, R248, and N249. K184 serves as the catalytic Proton acceptor. Residue R248 coordinates NADPH. V270 and E272 together coordinate NADPH.

This sequence belongs to the NAD-dependent glycerol-3-phosphate dehydrogenase family.

The protein localises to the cytoplasm. The catalysed reaction is sn-glycerol 3-phosphate + NAD(+) = dihydroxyacetone phosphate + NADH + H(+). It catalyses the reaction sn-glycerol 3-phosphate + NADP(+) = dihydroxyacetone phosphate + NADPH + H(+). Its pathway is membrane lipid metabolism; glycerophospholipid metabolism. Functionally, catalyzes the reduction of the glycolytic intermediate dihydroxyacetone phosphate (DHAP) to sn-glycerol 3-phosphate (G3P), the key precursor for phospholipid synthesis. The chain is Glycerol-3-phosphate dehydrogenase [NAD(P)+] from Thermus thermophilus (strain ATCC BAA-163 / DSM 7039 / HB27).